Reading from the N-terminus, the 396-residue chain is Chalcone synthase (396 aa).

The active site involves Cys169.

Belongs to the thiolase-like superfamily. Chalcone/stilbene synthases family.

It carries out the reaction (E)-4-coumaroyl-CoA + 3 malonyl-CoA + 3 H(+) = 2',4,4',6'-tetrahydroxychalcone + 3 CO2 + 4 CoA. It participates in secondary metabolite biosynthesis; flavonoid biosynthesis. The primary product of this enzyme is 4,2',4',6'-tetrahydroxychalcone (also termed naringenin-chalcone or chalcone) which can under specific conditions spontaneously isomerize into naringenin. The polypeptide is Chalcone synthase (CHS) (Pinus sylvestris (Scotch pine)).